Here is a 284-residue protein sequence, read N- to C-terminus: BES1/BZR1 homolog protein 3 (284 aa).

2 disordered regions span residues 1–21 (MTSGTRTPTWKERENNKRRER) and 85–116 (GSTSASPCSSYQHSPRASYNPSPSSSSFPSPT). The required for DNA-binding stretch occupies residues 6–88 (RTPTWKEREN…RMDLMNGSTS (83 aa)). Over residues 85-97 (GSTSASPCSSYQH) the composition is skewed to polar residues. The span at 98–114 (SPRASYNPSPSSSSFPS) shows a compositional bias: low complexity. Residue threonine 153 is modified to Phosphothreonine.

It belongs to the BZR/LAT61 family. In terms of processing, phosphorylated. Phosphorylation increases protein degradation.

This is BES1/BZR1 homolog protein 3 (BEH3) from Arabidopsis thaliana (Mouse-ear cress).